Reading from the N-terminus, the 215-residue chain is Urease accessory protein UreG (215 aa).

Position 24–31 (24–31) interacts with GTP; the sequence is GPVGSGKT.

The protein belongs to the SIMIBI class G3E GTPase family. UreG subfamily. In terms of assembly, homodimer. UreD, UreF and UreG form a complex that acts as a GTP-hydrolysis-dependent molecular chaperone, activating the urease apoprotein by helping to assemble the nickel containing metallocenter of UreC. The UreE protein probably delivers the nickel.

Its subcellular location is the cytoplasm. Its function is as follows. Facilitates the functional incorporation of the urease nickel metallocenter. This process requires GTP hydrolysis, probably effectuated by UreG. The chain is Urease accessory protein UreG from Burkholderia cenocepacia (strain HI2424).